We begin with the raw amino-acid sequence, 416 residues long: Pentraxin fusion protein (416 aa).

A signal peptide spans 1–14 (MKSLLLFLKSQVFG). Asn129 carries N-linked (GlcNAc...) asparagine glycosylation. The segment at 184-206 (GTEASDSSESVDGTEAPASPESD) is disordered. One can recognise a Pentraxin (PTX) domain in the interval 220-416 (TNKSFMFPKE…YSMIGNVAEV (197 aa)). Residue Asn221 is glycosylated (N-linked (GlcNAc...) asparagine). An intrachain disulfide couples Cys251 to Cys311. Asp275, Gln353, Asp354, and Gln364 together coordinate Ca(2+).

It depends on Ca(2+) as a cofactor.

This chain is Pentraxin fusion protein (pxn1), found in Xenopus laevis (African clawed frog).